The chain runs to 200 residues: Max dimerization protein 3 (200 aa).

Disordered regions lie at residues 31 to 56 and 133 to 164; these read SILPCDPATPGRRKRQRTNSNPDNVR and RLLPPNTERIRTDSLDSSNLSSERSDSDQEDL. The bHLH domain occupies 54–106; the sequence is NVRSVHNELEKHRRAQLRRCLEQLKQQVPLSMENSRHTTLSLLHRAKQHIKKL.

In terms of assembly, efficient DNA binding requires dimerization with another bHLH protein. Binds DNA as a heterodimer with MAX. Expressed broadly throughout the CNS and the eye, starting at neurula stages.

The protein localises to the nucleus. Transcriptional repressor. Binds with MAX to form a sequence-specific DNA-binding protein complex which recognizes the core sequence 5'-CAC[GA]TG-3'. This chain is Max dimerization protein 3 (mxd3), found in Xenopus laevis (African clawed frog).